We begin with the raw amino-acid sequence, 248 residues long: Probable transcriptional regulatory protein Nham_3525 (248 aa).

The segment at 1-21 is disordered; the sequence is MAGHSQFKNIMHRKGRQDAQK.

Belongs to the TACO1 family.

The protein localises to the cytoplasm. The polypeptide is Probable transcriptional regulatory protein Nham_3525 (Nitrobacter hamburgensis (strain DSM 10229 / NCIMB 13809 / X14)).